Consider the following 447-residue polypeptide: Gustatory receptor family protein 3 (447 aa).

At 1 to 69 (MTITASNTLE…HTHSSARNTM (69 aa)) the chain is on the extracellular side. The helical transmembrane segment at 70 to 90 (FKWPLTIYNYLTLAILTAATI) threads the bilayer. Over 91-116 (RRISQIKQKSATNEEKDAAFHVLNPT) the chain is Cytoplasmic. The chain crosses the membrane as a helical span at residues 117–137 (FVLTLCHALLMFSGLAAGFLL). Topologically, residues 138-171 (LKLQKQREKMYHVLDQGLGRNRNEEHDSHHFKLN) are extracellular. The chain crosses the membrane as a helical span at residues 172–192 (KLFISISFSFAAALSFVQIAT). The Cytoplasmic segment spans residues 193–211 (KMRYLDLPDTPDLINRKIY). The helical transmembrane segment at 212-232 (FVILEGYVIFIASSCISLVAI) threads the bilayer. The Extracellular portion of the chain corresponds to 233-292 (LFFQLCRILQFSIGQLIEEMVPKEKEECPLPEQSLQQIHDVQIHYQEISNAKLYIEQNFS). A helical membrane pass occupies residues 293-313 (FSLFYTYGCCIPLTCLLGYIA). Residues 314-328 (FRNGIQADMAETFSV) are Cytoplasmic-facing. The helical transmembrane segment at 329-349 (AIWLTNTMLALMLFSIPAFMI) threads the bilayer. Residues 350–405 (AEEGDKLLTASFKMYHETLCEERDLLVLSQMSFLSFQMHATKLTLTAGNFFMMNRK) lie on the Extracellular side of the membrane. Residues 406 to 426 (IMISLFSAIFTYFLILVQFDA) traverse the membrane as a helical segment. Topologically, residues 427–447 (EKERAGECNNQSRVLIVQPPV) are cytoplasmic.

It belongs to the insect chemoreceptor superfamily. Gustatory receptor (GR) family. Expressed in I2 pharyngeal neurons.

It localises to the membrane. Functionally, chemoreceptor involved in light-induced avoidance behavior. Probably acts as a molecular sensor in I2 pharyngeal neurons, required for the inhibition of feeding in response to light and hydrogen peroxide. Involved in circadian rhythms, probably by acting as a light sensor. In contrast to lite-1, does not act as a photoreceptor. The protein is Gustatory receptor family protein 3 of Caenorhabditis elegans.